A 499-amino-acid chain; its full sequence is Diacylglycerol kinase 1 (499 aa).

One can recognise a DAGKc domain in the interval 41-194 (APCCPVVVFI…IDSWHIIMRM (154 aa)). A disordered region spans residues 442-479 (PCKSKSVNDPSSPMCCSNHDDDERNSLEDEDEWEEGRK). Polar residues predominate over residues 446-456 (KSVNDPSSPMC). Residues 459 to 468 (NHDDDERNSL) are compositionally biased toward basic and acidic residues.

This sequence belongs to the eukaryotic diacylglycerol kinase family. Monomer. In terms of tissue distribution, highly expressed in roots.

The catalysed reaction is a 1,2-diacyl-sn-glycerol + ATP = a 1,2-diacyl-sn-glycero-3-phosphate + ADP + H(+). Functionally, phosphorylates the second messenger diacylglycerol (DAG) to generate phosphatidic acid (PA), another important signaling molecule. PA is required for plant development and responses to abiotic stress. May play a role in disease resistance responses to pathogen attack. Modulates root architecture by regulating the ratio of DAG and PA, which have opposite effect on the promotion or suppression of lateral roots vs seminal roots. Suppresses lateral root number, but promotes seminal root and crown root thickness. In Oryza sativa subsp. japonica (Rice), this protein is Diacylglycerol kinase 1.